Here is a 175-residue protein sequence, read N- to C-terminus: Peptide deformylase (175 aa).

Fe cation-binding residues include C94 and H136. The active site involves E137. H140 serves as a coordination point for Fe cation.

Belongs to the polypeptide deformylase family. Requires Fe(2+) as cofactor.

It catalyses the reaction N-terminal N-formyl-L-methionyl-[peptide] + H2O = N-terminal L-methionyl-[peptide] + formate. In terms of biological role, removes the formyl group from the N-terminal Met of newly synthesized proteins. Requires at least a dipeptide for an efficient rate of reaction. N-terminal L-methionine is a prerequisite for activity but the enzyme has broad specificity at other positions. The polypeptide is Peptide deformylase (Brucella suis biovar 1 (strain 1330)).